The primary structure comprises 290 residues: Signal recognition particle receptor FtsY (290 aa).

Residues 91–98, 173–177, and 237–240 contribute to the GTP site; these read GTNGSGKT, DTSGR, and TKVD.

It belongs to the GTP-binding SRP family. FtsY subfamily. Part of the signal recognition particle protein translocation system, which is composed of SRP and FtsY.

It is found in the cell inner membrane. The protein resides in the cytoplasm. It carries out the reaction GTP + H2O = GDP + phosphate + H(+). Involved in targeting and insertion of nascent membrane proteins into the cytoplasmic membrane. Acts as a receptor for the complex formed by the signal recognition particle (SRP) and the ribosome-nascent chain (RNC). The polypeptide is Signal recognition particle receptor FtsY (Chlamydia pneumoniae (Chlamydophila pneumoniae)).